The following is a 206-amino-acid chain: Protein Nef (206 aa).

A lipid anchor (N-myristoyl glycine; by host) is attached at G2. The residue at position 6 (S6) is a Phosphoserine; by host. Residues 62-66 (EESDE) form an acidic; interacts with host PACS1 and PACS2; stabilizes the interaction of NEF/MHC-I with host AP1M1; necessary for MHC-I internalization region. The SH3-binding; interaction with Src family tyrosine kinases stretch occupies residues 70–79 (PVRPQVPLRP). Positions 73–76 (PQVP) match the PxxP; stabilizes the interaction of NEF/MHC-I with host AP1M1; necessary for MHC-I internalization motif. A mediates dimerization, Nef-PTE1 interaction region spans residues 109-125 (EILDLWVYNTQGIFPDW). A binding to ATP6V1H region spans residues 149 to 181 (VDPQEVEEDTEGETNSLLHPICQHGMEDPERQV). A Dileucine internalization motif; necessary for CD4 internalization motif is present at residues 165–166 (LL). Residues 175–176 (ED) carry the Diacidic; necessary for CD4 internalization motif.

The protein belongs to the lentivirus primate group Nef protein family. As to quaternary structure, monomer; cytosolic form. Homodimer; membrane bound form. Interacts with Nef associated p21-activated kinase (PAK2); this interaction activates PAK2. Associates with the Nef-MHC-I-AP1 complex; this complex is required for MHC-I internalization. Interacts (via C-terminus) with host PI3-kinase. Interacts with host PACS1; this interaction seems to be weak. Interacts with host PACS2. Interacts with host LCK and MAPK3; these interactions inhibit the kinase activity of the latter. Interacts with host ATP6V1H; this interaction may play a role in CD4 endocytosis. Associates with the CD4-Nef-AP2 complex; this complex is required for CD4 internalization. Interacts with host AP2 subunit alpha and AP2 subunit sigma2. Interacts with TCR-zeta chain; this interaction up-regulates the Fas ligand (FasL) surface expression. Interacts with host HCK, LYN, and SRC; these interactions activate the Src family kinases. Interacts with MAP3K5; this interaction inhibits the Fas and TNFR-mediated death signals. Interacts with beta-COP and PTE1. Interacts with human RACK1; this increases Nef phosphorylation by PKC. Interacts with TP53; this interaction decreases the half-life of TP53, protecting the infected cell against p53-mediated apoptosis. Post-translationally, the virion-associated Nef proteins are cleaved by the viral protease to release the soluble C-terminal core protein. Nef is probably cleaved concomitantly with viral structural proteins on maturation of virus particles. In terms of processing, myristoylated. Phosphorylated on serine residues, probably by host PKCdelta and theta.

It localises to the host cell membrane. The protein resides in the virion. Its subcellular location is the secreted. It is found in the host Golgi apparatus membrane. Its function is as follows. Factor of infectivity and pathogenicity, required for optimal virus replication. Alters numerous pathways of T-lymphocyte function and down-regulates immunity surface molecules in order to evade host defense and increase viral infectivity. Alters the functionality of other immunity cells, like dendritic cells, monocytes/macrophages and NK cells. Functionally, in infected CD4(+) T-lymphocytes, down-regulates the surface MHC-I, mature MHC-II, CD4, CD28, CCR5 and CXCR4 molecules. Mediates internalization and degradation of host CD4 through the interaction of with the cytoplasmic tail of CD4, the recruitment of AP-2 (clathrin adapter protein complex 2), internalization through clathrin coated pits, and subsequent transport to endosomes and lysosomes for degradation. Diverts host MHC-I molecules to the trans-Golgi network-associated endosomal compartments by an endocytic pathway to finally target them for degradation. MHC-I down-regulation may involve AP-1 (clathrin adapter protein complex 1) or possibly Src family kinase-ZAP70/Syk-PI3K cascade recruited by PACS2. In consequence infected cells are masked for immune recognition by cytotoxic T-lymphocytes. Decreasing the number of immune receptors also prevents reinfection by more HIV particles (superinfection). Down-regulates host SERINC3 and SERINC5 thereby excluding these proteins from the viral particles. Virion infectivity is drastically higher when SERINC3 or SERINC5 are excluded from the viral envelope, because these host antiviral proteins impair the membrane fusion event necessary for subsequent virion penetration. Bypasses host T-cell signaling by inducing a transcriptional program nearly identical to that of anti-CD3 cell activation. Interaction with TCR-zeta chain up-regulates the Fas ligand (FasL). Increasing surface FasL molecules and decreasing surface MHC-I molecules on infected CD4(+) cells send attacking cytotoxic CD8+ T-lymphocytes into apoptosis. In terms of biological role, plays a role in optimizing the host cell environment for viral replication without causing cell death by apoptosis. Protects the infected cells from apoptosis in order to keep them alive until the next virus generation is ready to strike. Inhibits the Fas and TNFR-mediated death signals by blocking MAP3K5/ASK1. Decreases the half-life of TP53, protecting the infected cell against p53-mediated apoptosis. Inhibits the apoptotic signals regulated by the Bcl-2 family proteins through the formation of a Nef/PI3-kinase/PAK2 complex that leads to activation of PAK2 and induces phosphorylation of host BAD. Its function is as follows. Extracellular Nef protein targets CD4(+) T-lymphocytes for apoptosis by interacting with CXCR4 surface receptors. The chain is Protein Nef from Homo sapiens (Human).